The primary structure comprises 435 residues: 3-phosphoshikimate 1-carboxyvinyltransferase (435 aa).

Residues K22, S23, and R27 each coordinate 3-phosphoshikimate. A phosphoenolpyruvate-binding site is contributed by K22. G94 and R122 together coordinate phosphoenolpyruvate. The 3-phosphoshikimate site is built by S166, Q168, D314, and K341. Q168 is a phosphoenolpyruvate binding site. The active-site Proton acceptor is D314. The phosphoenolpyruvate site is built by R345 and R388.

Belongs to the EPSP synthase family. Monomer.

The protein resides in the cytoplasm. The catalysed reaction is 3-phosphoshikimate + phosphoenolpyruvate = 5-O-(1-carboxyvinyl)-3-phosphoshikimate + phosphate. It participates in metabolic intermediate biosynthesis; chorismate biosynthesis; chorismate from D-erythrose 4-phosphate and phosphoenolpyruvate: step 6/7. In terms of biological role, catalyzes the transfer of the enolpyruvyl moiety of phosphoenolpyruvate (PEP) to the 5-hydroxyl of shikimate-3-phosphate (S3P) to produce enolpyruvyl shikimate-3-phosphate and inorganic phosphate. In Vesicomyosocius okutanii subsp. Calyptogena okutanii (strain HA), this protein is 3-phosphoshikimate 1-carboxyvinyltransferase.